The following is a 243-amino-acid chain: UPF0246 protein SpyM51747 (243 aa).

It belongs to the UPF0246 family.

The chain is UPF0246 protein SpyM51747 from Streptococcus pyogenes serotype M5 (strain Manfredo).